Here is a 352-residue protein sequence, read N- to C-terminus: Tubby-like F-box protein 10 (352 aa).

The span at 1 to 11 (MAAVREPREEA) shows a compositional bias: basic and acidic residues. A disordered region spans residues 1 to 23 (MAAVREPREEAAVGEGEGEEEGR). In terms of domain architecture, F-box spans 22 to 78 (GRWGGLLPELVEEVVRRVEASGGERWPARKDLVSCACVCRRWREAAAAVVRPLPESG).

It belongs to the TUB family. As to expression, ubiquitous.

The sequence is that of Tubby-like F-box protein 10 (TULP10) from Oryza sativa subsp. japonica (Rice).